Here is a 687-residue protein sequence, read N- to C-terminus: Geranylgeranyl transferase type-2 subunit alpha 2 (687 aa).

5 PFTA repeats span residues 38–72 (YTKE…SRLD), 83–117 (IIDE…KKGH), 132–167 (YQKQ…LTKT), 168–203 (SEED…SLVA), and 214–248 (TIRR…QTVK). LRR repeat units follow at residues 523–545 (MNNI…VEKL), 546–567 (LFVQ…LEAM), 568–591 (QLLC…SLRH), 592–616 (LKQL…TTRY), and 646–668 (LMKL…EFSS).

This sequence belongs to the protein prenyltransferase subunit alpha family. In terms of assembly, heterotrimer composed of the alpha subunit RGTA, the beta subunit RGTB and REP; within this trimer, RGTA and RGTB form the catalytic component, while REP mediates peptide substrate binding.

The enzyme catalyses geranylgeranyl diphosphate + L-cysteinyl-[protein] = S-geranylgeranyl-L-cysteinyl-[protein] + diphosphate. Its activity is regulated as follows. The enzymatic reaction requires the aid of the Rab escort protein REP. In terms of biological role, catalyzes the transfer of a geranylgeranyl moiety from geranylgeranyl diphosphate to both cysteines of Rab proteins with the C-terminal sequence -CCXX, CXXX, -XCCX and -XCXC, such as RABA1A, RABA2A, RABF2A and RABG2. Does not seem to be a functional Rab-GGT alpha subunit in vitro. The chain is Geranylgeranyl transferase type-2 subunit alpha 2 from Arabidopsis thaliana (Mouse-ear cress).